Consider the following 145-residue polypeptide: D-aminoacyl-tRNA deacylase (145 aa).

Positions 137 to 138 (GP) match the Gly-cisPro motif, important for rejection of L-amino acids motif.

Belongs to the DTD family. Homodimer.

The protein localises to the cytoplasm. The catalysed reaction is glycyl-tRNA(Ala) + H2O = tRNA(Ala) + glycine + H(+). It carries out the reaction a D-aminoacyl-tRNA + H2O = a tRNA + a D-alpha-amino acid + H(+). Its function is as follows. An aminoacyl-tRNA editing enzyme that deacylates mischarged D-aminoacyl-tRNAs. Also deacylates mischarged glycyl-tRNA(Ala), protecting cells against glycine mischarging by AlaRS. Acts via tRNA-based rather than protein-based catalysis; rejects L-amino acids rather than detecting D-amino acids in the active site. By recycling D-aminoacyl-tRNA to D-amino acids and free tRNA molecules, this enzyme counteracts the toxicity associated with the formation of D-aminoacyl-tRNA entities in vivo and helps enforce protein L-homochirality. In Pseudomonas syringae pv. syringae (strain B728a), this protein is D-aminoacyl-tRNA deacylase.